We begin with the raw amino-acid sequence, 361 residues long: Peptide chain release factor 1 (361 aa).

The residue at position 236 (glutamine 236) is an N5-methylglutamine. The segment at 286–306 (AADSQRAEARKGQVGSGDRSE) is disordered.

Belongs to the prokaryotic/mitochondrial release factor family. Methylated by PrmC. Methylation increases the termination efficiency of RF1.

It localises to the cytoplasm. Peptide chain release factor 1 directs the termination of translation in response to the peptide chain termination codons UAG and UAA. This chain is Peptide chain release factor 1, found in Magnetococcus marinus (strain ATCC BAA-1437 / JCM 17883 / MC-1).